A 189-amino-acid polypeptide reads, in one-letter code: Large ribosomal subunit protein bL25 (189 aa).

Belongs to the bacterial ribosomal protein bL25 family. CTC subfamily. As to quaternary structure, part of the 50S ribosomal subunit; part of the 5S rRNA/L5/L18/L25 subcomplex. Contacts the 5S rRNA. Binds to the 5S rRNA independently of L5 and L18.

Functionally, this is one of the proteins that binds to the 5S RNA in the ribosome where it forms part of the central protuberance. The chain is Large ribosomal subunit protein bL25 from Azobacteroides pseudotrichonymphae genomovar. CFP2.